The following is a 253-amino-acid chain: Sulfate transporter CysZ (253 aa).

Helical transmembrane passes span 27-47 (FVLL…YLAV), 71-91 (ILWP…FTVV), 150-170 (LFIL…WLLF), and 211-231 (IVYV…AAVA).

It belongs to the CysZ family.

The protein localises to the cell inner membrane. Functionally, high affinity, high specificity proton-dependent sulfate transporter, which mediates sulfate uptake. Provides the sulfur source for the cysteine synthesis pathway. The polypeptide is Sulfate transporter CysZ (Pseudomonas syringae pv. tomato (strain ATCC BAA-871 / DC3000)).